Consider the following 589-residue polypeptide: Kelch-like protein 25 (589 aa).

Residues 46-114 (TDMTLWAGNR…AYSSKIIINE (69 aa)) enclose the BTB domain. A BACK domain is found at 149–250 (CLGMMILSDA…LPSELLKEAV (102 aa)). 6 Kelch repeats span residues 296-340 (TLLI…AIGC), 341-388 (KVYI…ELDN), 389-444 (CLYV…SAKL), 446-492 (LFVF…VLGS), 494-538 (IFIM…ASGN), and 539-585 (KVYV…STWK).

As to quaternary structure, component of the BCR(KLHL25) E3 ubiquitin ligase complex, at least composed of cul3, klhl25 and rbx1.

It functions in the pathway protein modification; protein ubiquitination. In terms of biological role, substrate-specific adapter of a BCR (BTB-CUL3-RBX1) E3 ubiquitin ligase complex involved in various processes, such as translation homeostasis and lipid synthesis. The BCR(KLHL25) ubiquitin ligase complex acts by mediating ubiquitination of hypophosphorylated eif4ebp1 (4E-BP1): ubiquitination and subsequent degradation of hypophosphorylated EIF4EBP1 (4E-BP1) probably serves as a homeostatic mechanism to maintain translation and prevent eIF4E inhibition when eIF4E levels are low. The BCR(KLHL25) complex also acts as a regulator of lipid synthesis by mediating ubiquitination and degradation of ACLY, thereby inhibiting lipid synthesis. The chain is Kelch-like protein 25 from Xenopus laevis (African clawed frog).